A 194-amino-acid polypeptide reads, in one-letter code: Peptidyl-tRNA hydrolase (194 aa).

Position 16 (tyrosine 16) interacts with tRNA. The active-site Proton acceptor is the histidine 21. The tRNA site is built by phenylalanine 67, asparagine 69, and asparagine 115.

The protein belongs to the PTH family. Monomer.

It is found in the cytoplasm. The enzyme catalyses an N-acyl-L-alpha-aminoacyl-tRNA + H2O = an N-acyl-L-amino acid + a tRNA + H(+). Its function is as follows. Hydrolyzes ribosome-free peptidyl-tRNAs (with 1 or more amino acids incorporated), which drop off the ribosome during protein synthesis, or as a result of ribosome stalling. Catalyzes the release of premature peptidyl moieties from peptidyl-tRNA molecules trapped in stalled 50S ribosomal subunits, and thus maintains levels of free tRNAs and 50S ribosomes. The sequence is that of Peptidyl-tRNA hydrolase from Escherichia coli O17:K52:H18 (strain UMN026 / ExPEC).